The sequence spans 229 residues: Orotate phosphoribosyltransferase (229 aa).

5-phospho-alpha-D-ribose 1-diphosphate is bound by residues R107, K108, K111, H113, and E133–S141. Position 137 (T137) interacts with orotate.

This sequence belongs to the purine/pyrimidine phosphoribosyltransferase family. PyrE subfamily. As to quaternary structure, homodimer. It depends on Mg(2+) as a cofactor.

The catalysed reaction is orotidine 5'-phosphate + diphosphate = orotate + 5-phospho-alpha-D-ribose 1-diphosphate. It participates in pyrimidine metabolism; UMP biosynthesis via de novo pathway; UMP from orotate: step 1/2. Catalyzes the transfer of a ribosyl phosphate group from 5-phosphoribose 1-diphosphate to orotate, leading to the formation of orotidine monophosphate (OMP). This is Orotate phosphoribosyltransferase from Rhizobium etli (strain ATCC 51251 / DSM 11541 / JCM 21823 / NBRC 15573 / CFN 42).